Here is a 222-residue protein sequence, read N- to C-terminus: Large ribosomal subunit protein bL25 (222 aa).

The protein belongs to the bacterial ribosomal protein bL25 family. CTC subfamily. As to quaternary structure, part of the 50S ribosomal subunit; part of the 5S rRNA/L5/L18/L25 subcomplex. Contacts the 5S rRNA. Binds to the 5S rRNA independently of L5 and L18.

Its function is as follows. This is one of the proteins that binds to the 5S RNA in the ribosome where it forms part of the central protuberance. The chain is Large ribosomal subunit protein bL25 from Ruthia magnifica subsp. Calyptogena magnifica.